Reading from the N-terminus, the 400-residue chain is MDFNMKKLASDAGIFFTRAVQFTEEKFGQAEKTELDAHFENLLARADSTKNWTERILRQTEVLLQPNPSARVEEFLYEKLDRKVPSRVTNGELLAQYMAEAASELGPSTPYGKTLIKVSEAEKRLGAAERDFIHTASLSFLTPLRNFLEGDWKTISKERRLLQNRRLDLDACKARLKKAKAAEAKATTVPDFQETRPRNYILSASASALWNDEVDKAEQELRVAQTEFDRQAEVTRLLLEGISSTHVNHLRCLHEFVKSQTTYYAQCYRHMLDLQKQLGSSQGAIFPGTFVGTTEPASPPLSSTSPTTTAATMPVVPTGAVLAPPEEAALCLEEVAPPASGTRKARVLYDYEAADSSELALLADELITVYSLPGMDPDWLIGERGNKKGKVPVTYLELLS.

Methionine 1 is modified (N-acetylmethionine). A membrane-binding amphipathic helix region spans residues 1–27 (MDFNMKKLASDAGIFFTRAVQFTEEKF). The residue at position 10 (serine 10) is a Phosphoserine. The BAR domain occupies 24–287 (EEKFGQAEKT…LGSSQGAIFP (264 aa)). Positions 205–234 (SASALWNDEVDKAEQELRVAQTEFDRQAEV) form a coiled coil. An SH3 domain is found at 340–400 (SGTRKARVLY…VPVTYLELLS (61 aa)). Residue serine 400 is modified to Phosphoserine.

This sequence belongs to the endophilin family. As to quaternary structure, homodimer, and heterodimer with SH3GLB1.

The protein localises to the cytoplasm. This is Endophilin-B2 (Sh3glb2) from Mus musculus (Mouse).